We begin with the raw amino-acid sequence, 247 residues long: Neurotrophic factor BDNF precursor form (247 aa).

The first 18 residues, 1–18 (MTILFLTMVISYFGCMKA), serve as a signal peptide directing secretion. Residues 19–128 (APMKEASVRG…AANMSMRVRR (110 aa)) constitute a propeptide that is removed on maturation. The N-linked (GlcNAc...) asparagine glycan is linked to Asn-121. Cystine bridges form between Cys-141–Cys-208, Cys-186–Cys-237, and Cys-196–Cys-239.

It belongs to the NGF-beta family. Monomers and homodimers. Binds to NTRK2/TRKB. Can form heterodimers with other neurotrophin family members, such as NTF3 and NTF4 (in vitro), but the physiological relevance of this is not clear. BDNF precursor form: interacts with the heterodimer formed by NGFR and SORCS2. Mature BDNF has much lower affinity for the heterodimer formed by NGFR and SORCS2. N-glycosylated and glycosulfated, contrary to mature BDNF. In terms of processing, mature BDNF is produced by proteolytic removal of the propeptide, catalyzed by a FURIN family member. In addition, the precursor form is proteolytically cleaved within the propeptide, but this is not an obligatory intermediate for the production of mature BDNF. Can be converted into mature BDNF by plasmin (PLG).

The protein resides in the secreted. In terms of biological role, important signaling molecule that activates signaling cascades downstream of NTRK2. During development, promotes the survival and differentiation of selected neuronal populations of the peripheral and central nervous systems. Participates in axonal growth, pathfinding and in the modulation of dendritic growth and morphology. Major regulator of synaptic transmission and plasticity at adult synapses in many regions of the CNS. The versatility of BDNF is emphasized by its contribution to a range of adaptive neuronal responses including long-term potentiation (LTP), long-term depression (LTD), certain forms of short-term synaptic plasticity, as well as homeostatic regulation of intrinsic neuronal excitability. The sequence is that of Neurotrophic factor BDNF precursor form (BDNF) from Canis lupus familiaris (Dog).